An 89-amino-acid polypeptide reads, in one-letter code: Small ribosomal subunit protein uS15 (89 aa).

The protein belongs to the universal ribosomal protein uS15 family. As to quaternary structure, part of the 30S ribosomal subunit. Forms a bridge to the 50S subunit in the 70S ribosome, contacting the 23S rRNA.

Functionally, one of the primary rRNA binding proteins, it binds directly to 16S rRNA where it helps nucleate assembly of the platform of the 30S subunit by binding and bridging several RNA helices of the 16S rRNA. Forms an intersubunit bridge (bridge B4) with the 23S rRNA of the 50S subunit in the ribosome. The chain is Small ribosomal subunit protein uS15 from Paraburkholderia phymatum (strain DSM 17167 / CIP 108236 / LMG 21445 / STM815) (Burkholderia phymatum).